Consider the following 515-residue polypeptide: Maturase K (515 aa).

Belongs to the intron maturase 2 family. MatK subfamily.

It is found in the plastid. Its subcellular location is the chloroplast. Its function is as follows. Usually encoded in the trnK tRNA gene intron. Probably assists in splicing its own and other chloroplast group II introns. This Pinus coulteri (Coulter pine) protein is Maturase K.